Here is a 190-residue protein sequence, read N- to C-terminus: dCTP deaminase (190 aa).

113-118 (KSTYAR) contacts dCTP. The active-site Proton donor/acceptor is the glutamate 139. 4 residues coordinate dCTP: glutamine 158, tyrosine 172, lysine 181, and glutamine 182.

The protein belongs to the dCTP deaminase family. In terms of assembly, homotrimer.

The catalysed reaction is dCTP + H2O + H(+) = dUTP + NH4(+). It functions in the pathway pyrimidine metabolism; dUMP biosynthesis; dUMP from dCTP (dUTP route): step 1/2. Functionally, catalyzes the deamination of dCTP to dUTP. In Chlamydia trachomatis serovar L2 (strain ATCC VR-902B / DSM 19102 / 434/Bu), this protein is dCTP deaminase.